A 241-amino-acid chain; its full sequence is Small ribosomal subunit protein uS3c (241 aa).

It belongs to the universal ribosomal protein uS3 family. In terms of assembly, part of the 30S ribosomal subunit.

It localises to the plastid. The polypeptide is Small ribosomal subunit protein uS3c (rps3) (Helicosporidium sp. subsp. Simulium jonesii (Green alga)).